Here is a 213-residue protein sequence, read N- to C-terminus: LexA repressor (213 aa).

The H-T-H motif DNA-binding region spans Q27–E47. Catalysis depends on for autocatalytic cleavage activity residues S133 and K170.

This sequence belongs to the peptidase S24 family. In terms of assembly, homodimer.

It catalyses the reaction Hydrolysis of Ala-|-Gly bond in repressor LexA.. Represses a number of genes involved in the response to DNA damage (SOS response), including recA and lexA. Has been shown to bind to the palindromic sequence 5'-CTG-N(8-12)-C-[TC]-G. In the presence of single-stranded DNA, RecA interacts with LexA causing an autocatalytic cleavage which disrupts the DNA-binding part of LexA, leading to derepression of the SOS regulon and eventually DNA repair. This chain is LexA repressor, found in Xanthomonas citri (Xanthomonas campestris pv. citri).